We begin with the raw amino-acid sequence, 121 residues long: Large ribosomal subunit protein bL17 (121 aa).

It belongs to the bacterial ribosomal protein bL17 family. In terms of assembly, part of the 50S ribosomal subunit. Contacts protein L32.

This chain is Large ribosomal subunit protein bL17, found in Metamycoplasma arthritidis (strain 158L3-1) (Mycoplasma arthritidis).